We begin with the raw amino-acid sequence, 156 residues long: Small ribosomal subunit protein uS7 (156 aa).

The protein belongs to the universal ribosomal protein uS7 family. In terms of assembly, part of the 30S ribosomal subunit. Contacts proteins S9 and S11.

One of the primary rRNA binding proteins, it binds directly to 16S rRNA where it nucleates assembly of the head domain of the 30S subunit. Is located at the subunit interface close to the decoding center, probably blocks exit of the E-site tRNA. This is Small ribosomal subunit protein uS7 from Heliobacterium modesticaldum (strain ATCC 51547 / Ice1).